The primary structure comprises 583 residues: COP9 signalosome complex subunit 10 (583 aa).

Positions 1–35 (MSDEEDYAEYMMSEEDMSSFEMDVDSDVEPDDAGL) are enriched in acidic residues. Residues 1-55 (MSDEEDYAEYMMSEEDMSSFEMDVDSDVEPDDAGLEQDQQVTGDDYDGSAGNSGD) are disordered. The 189-residue stretch at 297–485 (DHYNQSQMLS…DYVYFGEEYF (189 aa)) folds into the PCI domain.

As to quaternary structure, component of a COP9 signalosome-like (CSN) complex.

It is found in the cytoplasm. It localises to the nucleus. Functionally, component of the COP9 signalosome (CSN) complex that acts as an regulator of the ubiquitin (Ubl) conjugation pathway by mediating the deneddylation of the cullin subunit of SCF-type E3 ubiquitin-protein ligase complexes. The CSN complex is involved in the regulation of the mating pheromone response. This is COP9 signalosome complex subunit 10 (RRI2) from Kluyveromyces lactis (strain ATCC 8585 / CBS 2359 / DSM 70799 / NBRC 1267 / NRRL Y-1140 / WM37) (Yeast).